The following is a 144-amino-acid chain: AP-4 complex subunit sigma-1 (144 aa).

The protein belongs to the adaptor complexes small subunit family. Adaptor protein complex 4 (AP-4) is a heterotetramer composed of two large adaptins (epsilon-type subunit AP4E1 and beta-type subunit AP4B1), a medium adaptin (mu-type subunit AP4M1) and a small adaptin (sigma-type AP4S1).

Its subcellular location is the golgi apparatus. It is found in the trans-Golgi network membrane. In terms of biological role, component of the adaptor protein complex 4 (AP-4). Adaptor protein complexes are vesicle coat components involved both in vesicle formation and cargo selection. They control the vesicular transport of proteins in different trafficking pathways. AP-4 forms a non clathrin-associated coat on vesicles departing the trans-Golgi network (TGN) and may be involved in the targeting of proteins from the trans-Golgi network (TGN) to the endosomal-lysosomal system. It is also involved in protein sorting to the basolateral membrane in epithelial cells and the proper asymmetric localization of somatodendritic proteins in neurons. AP-4 is involved in the recognition and binding of tyrosine-based sorting signals found in the cytoplasmic part of cargos, but may also recognize other types of sorting signal. The polypeptide is AP-4 complex subunit sigma-1 (Mus musculus (Mouse)).